The chain runs to 98 residues: NADH-ubiquinone oxidoreductase chain 4L (98 aa).

3 helical membrane-spanning segments follow: residues 1–21 (MTPT…GMLT), 29–49 (SLLC…LIAL), and 61–81 (IILL…LVSI).

This sequence belongs to the complex I subunit 4L family. In terms of assembly, core subunit of respiratory chain NADH dehydrogenase (Complex I) which is composed of 45 different subunits.

The protein resides in the mitochondrion inner membrane. It carries out the reaction a ubiquinone + NADH + 5 H(+)(in) = a ubiquinol + NAD(+) + 4 H(+)(out). Its function is as follows. Core subunit of the mitochondrial membrane respiratory chain NADH dehydrogenase (Complex I) which catalyzes electron transfer from NADH through the respiratory chain, using ubiquinone as an electron acceptor. Part of the enzyme membrane arm which is embedded in the lipid bilayer and involved in proton translocation. The chain is NADH-ubiquinone oxidoreductase chain 4L (MT-ND4L) from Macaca pagensis (Mentawai macaque).